Consider the following 809-residue polypeptide: Lethal factor (809 aa).

Positions 1-33 are cleaved as a signal peptide; the sequence is MNIKKEFIKVISMSCLVTAITLSGPVFIPLVQG. Positions 39–66 are disordered; it reads DVGMHVKEKEKNKDENKRKDEERNKTQE. The segment covering 40-66 has biased composition (basic and acidic residues); the sequence is VGMHVKEKEKNKDENKRKDEERNKTQE. Residues 60–295 form an i; PA-binding region region; it reads ERNKTQEEHL…NLSLEELKDQ (236 aa). The region spanning 70–282 is the ATLF-like 1 domain; that stretch reads KEIMKHIVKI…AFNYMDKFNE (213 aa). The segment at 296 to 330 is IIA; that stretch reads RMLARYEKWEKIKQHYQHWSDSLSEEGRGLLKKLQ. Tandem repeats lie at residues 315 to 333, 342 to 357, 360 to 378, 380 to 397, and 399 to 416. Residues 315 to 416 are 5 X approximate repeats; it reads SDSLSEEGRG…EFLKKLKLDI (102 aa). Residues 336–416 are III; it reads KKDDIIHSLS…EFLKKLKLDI (81 aa). The interval 420–583 is IIB; sequence DINQRLQDTG…EYIRIDAKVV (164 aa). Positions 585–809 are IV; it reads KSKIDTKIQE…NDQIKFIINS (225 aa). The ATLF-like 2 domain maps to 609-804; sequence LPKYTKLITF…TFQFINDQIK (196 aa). Position 719 (His-719) interacts with Zn(2+). The active-site Proton acceptor is Glu-720. Zn(2+) is bound by residues His-723, Tyr-761, and Glu-768.

This sequence belongs to the peptidase M34 family. As to quaternary structure, interacts (via ATLF domain 1) with the cleaved form of protective antigen (PA-63) anthrax toxin; interaction is required for LF translocation into the host cytoplasm. Interacts with PA-63 homooligomers (either homoheptamers or homooctamers): three molecules of LF bind the PA-63 homoheptamer to form the PA(7)LF(3) complex, in which the relative position of the N-terminal alpha-helices in the three LFs determines which factor is translocated first. Requires Zn(2+) as cofactor.

The protein resides in the secreted. The protein localises to the host cytoplasm. It is found in the host cytosol. It carries out the reaction Preferred amino acids around the cleavage site can be denoted BBBBxHx-|-H, in which B denotes Arg or Lys, H denotes a hydrophobic amino acid, and x is any amino acid. The only known protein substrates are mitogen-activated protein (MAP) kinase kinases.. With respect to regulation, inhibited by NSC-12155 (1,3-Bis(2-methyl-4-aminoquinoline-6-yl)ure). Inhibited by phenoxyacetic acid bearing alpha-benzyl substituents on the C2-side chain. Inhibited by sulfonamide hydroxamate with benzylic additions at the sulfonamide nitrogen. Also inhibited by sulfonamide hydroxamates with alkylation at the sulfonamide nitrogen. Inhibited by hydroxamic acid inhibitors. Functionally, lethal factor (LF), which constitutes one of the three proteins composing the anthrax toxin, is able to trigger rapid cell death in macrophages. Acts as a protease that cleaves the N-terminal of most dual specificity mitogen-activated protein kinase kinases (MAPKKs or MAP2Ks) (except for MAP2K5): cleavage invariably occurs within the N-terminal proline-rich region preceding the kinase domain, thus disrupting a sequence involved in directing specific protein-protein interactions necessary for the assembly of signaling complexes. Also cleaves mouse Nlrp1b: host Nlrp1b cleavage promotes ubiquitination and degradation of the N-terminal part of Nlrp1b by the proteasome, thereby releasing the cleaved C-terminal part of Nlrp1b, which polymerizes and forms the Nlrp1b inflammasome followed by host cell pyroptosis. Able to cleave mouse Nlrp1b alleles 1 and 5, while it is not able to cleave Nlrp1b alleles 2, 3 and 4. In contrast, does not cleave NLRP1 human ortholog. LF is not toxic by itself and only acts as a lethal factor when associated with protective antigen (PA) to form the lethal toxin (LeTx): PA is required for LF translocation into the host cytosol. The chain is Lethal factor from Bacillus anthracis.